The sequence spans 834 residues: DNA polymerase I, thermostable (834 aa).

A 5'-3' exonuclease domain is found at K176 to Q262. Residues E412 to G834 form a polymerase region.

It belongs to the DNA polymerase type-A family.

It catalyses the reaction DNA(n) + a 2'-deoxyribonucleoside 5'-triphosphate = DNA(n+1) + diphosphate. Functionally, has 5'-3' exonuclease activity and no 3'-5' exonuclease activity. This chain is DNA polymerase I, thermostable (polA), found in Thermus caldophilus.